A 131-amino-acid chain; its full sequence is Small ribosomal subunit protein uS8 (131 aa).

It belongs to the universal ribosomal protein uS8 family. As to quaternary structure, part of the 30S ribosomal subunit. Contacts proteins S5 and S12.

Functionally, one of the primary rRNA binding proteins, it binds directly to 16S rRNA central domain where it helps coordinate assembly of the platform of the 30S subunit. The protein is Small ribosomal subunit protein uS8 of Campylobacter jejuni subsp. doylei (strain ATCC BAA-1458 / RM4099 / 269.97).